We begin with the raw amino-acid sequence, 188 residues long: dCTP deaminase, dUMP-forming (188 aa).

DCTP contacts are provided by residues 101-106 (KSSLGR), Asp-119, 127-129 (TLE), Gln-148, Tyr-162, and Gln-174. The active-site Proton donor/acceptor is Glu-129.

It belongs to the dCTP deaminase family. As to quaternary structure, homotrimer.

It catalyses the reaction dCTP + 2 H2O = dUMP + NH4(+) + diphosphate. The protein operates within pyrimidine metabolism; dUMP biosynthesis; dUMP from dCTP: step 1/1. Its function is as follows. Bifunctional enzyme that catalyzes both the deamination of dCTP to dUTP and the hydrolysis of dUTP to dUMP without releasing the toxic dUTP intermediate. This Corynebacterium jeikeium (strain K411) protein is dCTP deaminase, dUMP-forming.